The following is a 222-amino-acid chain: Thiopurine S-methyltransferase (222 aa).

S-adenosyl-L-methionine-binding residues include W10, L45, E66, and R123.

Belongs to the class I-like SAM-binding methyltransferase superfamily. TPMT family.

The protein localises to the cytoplasm. It catalyses the reaction S-adenosyl-L-methionine + a thiopurine = S-adenosyl-L-homocysteine + a thiopurine S-methylether.. The polypeptide is Thiopurine S-methyltransferase (Pseudomonas fluorescens (strain ATCC BAA-477 / NRRL B-23932 / Pf-5)).